Here is a 501-residue protein sequence, read N- to C-terminus: 2,3-bisphosphoglycerate-independent phosphoglycerate mutase (501 aa).

The Mn(2+) site is built by D12 and S62. Catalysis depends on S62, which acts as the Phosphoserine intermediate. Residues H121, 150 to 151 (RD), R182, R188, 253 to 256 (RSDR), and K322 each bind substrate. Residues D389, H393, D430, H431, and H449 each coordinate Mn(2+).

Belongs to the BPG-independent phosphoglycerate mutase family. As to quaternary structure, monomer. Requires Mn(2+) as cofactor.

It catalyses the reaction (2R)-2-phosphoglycerate = (2R)-3-phosphoglycerate. It participates in carbohydrate degradation; glycolysis; pyruvate from D-glyceraldehyde 3-phosphate: step 3/5. Catalyzes the interconversion of 2-phosphoglycerate and 3-phosphoglycerate. The chain is 2,3-bisphosphoglycerate-independent phosphoglycerate mutase from Ehrlichia ruminantium (strain Gardel).